We begin with the raw amino-acid sequence, 360 residues long: MTGLDRKKDDEIIEVLRMMAPGTSLREGLDNILLARTGALIVIGDSEKVLSLVDGGFYINKDYTPAHIYELAKMDGAIILSKDLKKILYANALLVPDTSIPTAETGTRHKTADRVAKQTGEVVVSISQRRNIITIYMGSRKYILRETPVILAEANQALQTLEKYKVALVEAINNLNILEIEDIVTLDDVAFVLQRTEMLMRVAAEIERYISELGSEGRLISLQLDELLTNVDADELFIIEDYAIRTDLRSDEILEKLRQLSYDELMNLVNICSILGYSPNADAFEMVISPRGYRLLSKIPRVPVNIIRNLVKKFSNLQGILNASIEELDDVAGIGEVRARIIWDGLRRVQEQIFLDSRKL.

One can recognise a DAC domain in the interval 9–147; the sequence is DDEIIEVLRM…GSRKYILRET (139 aa). ATP-binding positions include G76, L94, and 107–111; that span reads TRHKT.

The protein belongs to the DisA family. In terms of assembly, homooctamer. Requires Mg(2+) as cofactor.

The catalysed reaction is 2 ATP = 3',3'-c-di-AMP + 2 diphosphate. Functionally, participates in a DNA-damage check-point that is active prior to asymmetric division when DNA is damaged. DisA forms globular foci that rapidly scan along the chromosomes during sporulation, searching for lesions. When a lesion is present, DisA pauses at the lesion site. This triggers a cellular response that culminates in a temporary block in sporulation initiation. In terms of biological role, also has diadenylate cyclase activity, catalyzing the condensation of 2 ATP molecules into cyclic di-AMP (c-di-AMP). c-di-AMP acts as a signaling molecule that couples DNA integrity with progression of sporulation. The rise in c-di-AMP level generated by DisA while scanning the chromosome, operates as a positive signal that advances sporulation; upon encountering a lesion, the DisA focus arrests at the damaged site and halts c-di-AMP synthesis. This is DNA integrity scanning protein DisA from Acetivibrio thermocellus (strain ATCC 27405 / DSM 1237 / JCM 9322 / NBRC 103400 / NCIMB 10682 / NRRL B-4536 / VPI 7372) (Clostridium thermocellum).